Reading from the N-terminus, the 482-residue chain is Bifunctional protein GlmU (482 aa).

Residues 1-238 are pyrophosphorylase; sequence MSAIRPAAVV…HREIAGINNR (238 aa). Residues 12-15, Lys26, Gln79, and 84-85 each bind UDP-N-acetyl-alpha-D-glucosamine; these read LAAG and GT. Residue Asp110 participates in Mg(2+) binding. Residues Gly147, Glu163, Asn178, and Asn236 each contribute to the UDP-N-acetyl-alpha-D-glucosamine site. Asn236 lines the Mg(2+) pocket. A linker region spans residues 239–259; that stretch reads VQLAEARRILNDRLLTGAMLA. The tract at residues 260–482 is N-acetyltransferase; sequence GVTVVDPATT…AVSREADGED (223 aa). Residues Arg341 and Lys359 each contribute to the UDP-N-acetyl-alpha-D-glucosamine site. His371 (proton acceptor) is an active-site residue. UDP-N-acetyl-alpha-D-glucosamine contacts are provided by Tyr374 and Asn385. Residues Ala388, 394 to 395, Ser413, Ala431, and Arg448 each bind acetyl-CoA; that span reads NY. Residues 460 to 482 are disordered; sequence RKRPGSAAAKAAEAVSREADGED. Residues 464–473 are compositionally biased toward low complexity; it reads GSAAAKAAEA.

In the N-terminal section; belongs to the N-acetylglucosamine-1-phosphate uridyltransferase family. It in the C-terminal section; belongs to the transferase hexapeptide repeat family. As to quaternary structure, homotrimer. Mg(2+) serves as cofactor.

The protein localises to the cytoplasm. It catalyses the reaction alpha-D-glucosamine 1-phosphate + acetyl-CoA = N-acetyl-alpha-D-glucosamine 1-phosphate + CoA + H(+). It carries out the reaction N-acetyl-alpha-D-glucosamine 1-phosphate + UTP + H(+) = UDP-N-acetyl-alpha-D-glucosamine + diphosphate. It participates in nucleotide-sugar biosynthesis; UDP-N-acetyl-alpha-D-glucosamine biosynthesis; N-acetyl-alpha-D-glucosamine 1-phosphate from alpha-D-glucosamine 6-phosphate (route II): step 2/2. It functions in the pathway nucleotide-sugar biosynthesis; UDP-N-acetyl-alpha-D-glucosamine biosynthesis; UDP-N-acetyl-alpha-D-glucosamine from N-acetyl-alpha-D-glucosamine 1-phosphate: step 1/1. Its pathway is bacterial outer membrane biogenesis; LPS lipid A biosynthesis. Functionally, catalyzes the last two sequential reactions in the de novo biosynthetic pathway for UDP-N-acetylglucosamine (UDP-GlcNAc). The C-terminal domain catalyzes the transfer of acetyl group from acetyl coenzyme A to glucosamine-1-phosphate (GlcN-1-P) to produce N-acetylglucosamine-1-phosphate (GlcNAc-1-P), which is converted into UDP-GlcNAc by the transfer of uridine 5-monophosphate (from uridine 5-triphosphate), a reaction catalyzed by the N-terminal domain. This chain is Bifunctional protein GlmU, found in Streptomyces coelicolor (strain ATCC BAA-471 / A3(2) / M145).